Reading from the N-terminus, the 588-residue chain is L-fucose isomerase (588 aa).

Active-site proton acceptor residues include Glu335 and Asp359. 3 residues coordinate Mn(2+): Glu335, Asp359, and His525.

It belongs to the L-fucose isomerase family. The cofactor is Mn(2+).

Its subcellular location is the cytoplasm. The catalysed reaction is L-fucose = L-fuculose. It participates in carbohydrate degradation; L-fucose degradation; L-lactaldehyde and glycerone phosphate from L-fucose: step 1/3. Functionally, converts the aldose L-fucose into the corresponding ketose L-fuculose. This chain is L-fucose isomerase, found in Streptococcus pneumoniae (strain Taiwan19F-14).